The following is a 621-amino-acid chain: Stimulated by retinoic acid gene 6 protein-like (621 aa).

Over 1–21 the chain is Extracellular; the sequence is MLAASTRTRQINITCDNPVDR. Asn-12 is a glycosylation site (N-linked (GlcNAc...) asparagine). Residues 22–42 form a helical membrane-spanning segment; sequence EVFLHYSLIPSLCIILVLSFL. The Cytoplasmic portion of the chain corresponds to 43 to 53; the sequence is QRREHRRQRDD. A helical membrane pass occupies residues 54-74; that stretch reads TSYLLGNHFGIIVPLDFVGTF. The Extracellular segment spans residues 75–110; the sequence is SNRWSYGAAFGATANKVMFLFSEGYQPLTVPQWAQA. The helical transmembrane segment at 111–131 threads the bilayer; it reads FVLFIGGMEVGLSYFPFFACL. Over 132 to 137 the chain is Cytoplasmic; sequence SSEFQL. A helical transmembrane segment spans residues 138-158; it reads VSSILGFSYSLTWFVVTVLQI. Topologically, residues 159–173 are extracellular; that stretch reads SQCPHGQFLGRFETL. The helical transmembrane segment at 174–194 threads the bilayer; the sequence is VFYWPSLLCLGFLLGRFLHMF. Over 195 to 258 the chain is Cytoplasmic; it reads LKALPVHLGL…CFQFPSRMVG (64 aa). Residues 259-279 traverse the membrane as a helical segment; that stretch reads TLLLAFICLYLFIVIEFCVFL. Topologically, residues 280–321 are extracellular; that stretch reads HVRDKLDMFEDKLESYLTHMNETGTLTPIILQVKELISVTKG. The chain crosses the membrane as a helical span at residues 322–342; it reads VWVVTILPAALTCVTYLFHIL. Over 343-383 the chain is Cytoplasmic; the sequence is ACYRKHMKRLWAGDKHFLPQKFHSPSSAASVVAIARYSGWQ. A helical transmembrane segment spans residues 384 to 404; sequence IAYILWGYLIIHVVQSLCGVM. The Extracellular segment spans residues 405 to 424; sequence LMYGLVLPIIHHRGLEMLQG. A helical transmembrane segment spans residues 425–445; it reads FGLGVLTLSIVVGLIILQVWI. The Cytoplasmic portion of the chain corresponds to 446 to 476; the sequence is AGTFFLQPKLGTSDKQKPLALNNRRAFHNFN. Residues 477–497 form a helical membrane-spanning segment; that stretch reads YFLFFYNVLLGLGACLSRLLI. Residues 498-621 lie on the Extracellular side of the membrane; it reads SCLLGTWLIA…TQILLTCSDC (124 aa). Residue Thr-612 is modified to Phosphothreonine.

Glycosylated. Highly expressed in liver and small intestine. Also expressed in spleen, kidney, colon, stomach, placenta, adipose tissue and isolated adipocytes.

It is found in the cell membrane. Its function is as follows. Acts as a high-affinity cell-surface receptor for retinol-binding protein RBP4 and mediates RBP4-dependent retinol uptake in the liver. The polypeptide is Stimulated by retinoic acid gene 6 protein-like (Mus musculus (Mouse)).